The primary structure comprises 836 residues: Probable serine/threonine-protein kinase dyrk1 (836 aa).

The segment covering 99-278 (QQQYQQQHNN…SSNNNNNNKQ (180 aa)) has biased composition (low complexity). The tract at residues 99–286 (QQQYQQQHNN…KQSKYNDGYD (188 aa)) is disordered. The region spanning 304 to 624 (FEIISSLGKG…PLEALQHSFF (321 aa)) is the Protein kinase domain. ATP-binding positions include 310–318 (LGKGSFGQV) and Lys-333. The active-site Proton acceptor is the Asp-432. 3 disordered regions span residues 627-697 (DETS…QQQQ), 718-767 (TYSP…INSN), and 785-836 (NIYN…NNNI). Residues 630–697 (SQPPQQQSQQ…QQLQQQQQQQ (68 aa)) are compositionally biased toward low complexity. Residues 718–728 (TYSPTTQQSNH) are compositionally biased toward polar residues. Residues 729–744 (KLVDQMKKASMKDKSP) show a composition bias toward basic and acidic residues. Over residues 785–816 (NIYNNNNNNNNNNNNNNNNNNSNNYNNSNELS) the composition is skewed to low complexity.

It belongs to the protein kinase superfamily. CMGC Ser/Thr protein kinase family. MNB/DYRK subfamily.

It catalyses the reaction L-seryl-[protein] + ATP = O-phospho-L-seryl-[protein] + ADP + H(+). The enzyme catalyses L-threonyl-[protein] + ATP = O-phospho-L-threonyl-[protein] + ADP + H(+). It carries out the reaction L-tyrosyl-[protein] + ATP = O-phospho-L-tyrosyl-[protein] + ADP + H(+). The polypeptide is Probable serine/threonine-protein kinase dyrk1 (dyrk1) (Dictyostelium discoideum (Social amoeba)).